The sequence spans 370 residues: Anhydro-N-acetylmuramic acid kinase (370 aa).

12–19 is a binding site for ATP; that stretch reads GTSLDGVD.

The protein belongs to the anhydro-N-acetylmuramic acid kinase family.

The enzyme catalyses 1,6-anhydro-N-acetyl-beta-muramate + ATP + H2O = N-acetyl-D-muramate 6-phosphate + ADP + H(+). It participates in amino-sugar metabolism; 1,6-anhydro-N-acetylmuramate degradation. The protein operates within cell wall biogenesis; peptidoglycan recycling. Catalyzes the specific phosphorylation of 1,6-anhydro-N-acetylmuramic acid (anhMurNAc) with the simultaneous cleavage of the 1,6-anhydro ring, generating MurNAc-6-P. Is required for the utilization of anhMurNAc either imported from the medium or derived from its own cell wall murein, and thus plays a role in cell wall recycling. The chain is Anhydro-N-acetylmuramic acid kinase from Pectobacterium atrosepticum (strain SCRI 1043 / ATCC BAA-672) (Erwinia carotovora subsp. atroseptica).